The chain runs to 1630 residues: Merozoite surface protein 1 (1630 aa).

Residues 1-19 (MKIIFFLCSFLFFIINTQC) form the signal peptide. The tract at residues 60 to 113 (TKGASAQSGTSGTSGTSGPSGPSGTSPSSRSNTLPRSNTSSGASPPADASDSDA) is disordered. The interval 67–84 (SGTSGTSGTSGPSGPSGT) is tripeptide SG(TP) repeat. The span at 67-88 (SGTSGTSGTSGPSGPSGTSPSS) shows a compositional bias: low complexity. The segment covering 89 to 98 (RSNTLPRSNT) has biased composition (polar residues). N-linked (GlcNAc...) asparagine glycosylation occurs at Asn-97. Over residues 99–108 (SSGASPPADA) the composition is skewed to low complexity. A glycan (N-linked (GlcNAc...) asparagine) is linked at Asn-259. Residues 680-755 (KKNIKTEGQS…VPTPPAPVNN (76 aa)) form a disordered region. 2 stretches are compositionally biased toward polar residues: residues 685-695 (TEGQSDNSEPS) and 702-713 (GQATTKPGQQAG). Over residues 721–732 (VQAQAQEQKQAQ) the composition is skewed to low complexity. N-linked (GlcNAc...) asparagine glycans are attached at residues Asn-755, Asn-759, Asn-774, and Asn-835. Residues 884–906 (SMQPLSLTPQDKPEVSANDDTSH) form a disordered region. Residues Asn-911, Asn-955, Asn-1049, Asn-1156, and Asn-1165 are each glycosylated (N-linked (GlcNAc...) asparagine). The segment at 993–1107 (QLSFDLYNKY…EESIQTEDNY (115 aa)) is required for binding to host erythrocyte cell membrane. A compositionally biased stretch (polar residues) spans 1190-1203 (VSESGSDTLEQSQP). Positions 1190–1220 (VSESGSDTLEQSQPKKPASTHVGAESNTITT) are disordered. N-linked (GlcNAc...) asparagine glycans are attached at residues Asn-1436 and Asn-1517. EGF-like domains lie at 1521–1561 (HQCV…VENP) and 1562–1610 (NPTC…FCSS). 6 disulfides stabilise this stretch: Cys-1523–Cys-1534, Cys-1528–Cys-1544, Cys-1546–Cys-1557, Cys-1565–Cys-1578, Cys-1572–Cys-1592, and Cys-1594–Cys-1608. Ser-1609 carries the GPI-anchor amidated serine lipid modification. Positions 1610 to 1630 (SSNFLGISFLLILMLILYSFI) are cleaved as a propeptide — removed in mature form.

As to quaternary structure, forms a complex composed of subunits p83, p30, p38, and p42 which remain non-covalently associated; the complex is formed at the merozoite surface prior to egress from host erythrocytes. Forms a complex composed of processed MSP1 subunits, MSP6 subunit p36 and MSP7; the complex is formed at the merozoite surface prior to egress from host erythrocytes. Within the complex, interacts (via subunit p38) with MSP6 subunit p36 and (via subunits p83, p30 and p38) with MSP7 (via subunit p22). Forms a complex composed of MSP1, MSP6, DBLMSP1 and DBLMSP2. Within the complex, interacts (via subunit p38) with DBLMSP1 and DBLMSP2. Forms a complex composed of MSP1, and rhoptry proteins RhopH3, RAP1 and CLAG9/RhopH3. Within the complex, interacts (via subunits p42 and p19) with RhopH3 (via C-terminus). Forms a complex composed of MSP1, MSP6, MSP7, MSP9 and MSP3; within the complex, MSP6 and MSP9 mediate the binding to the host erythrocyte. Interacts (via subunits p19 and p42) with MSP9; the interaction is direct; MSP1 subunits p19 or p42, and MSP9 form a co-ligand complex that interacts with host SLC4A1/Band 3 protein. May interact with PFD6. Interacts with host spectrin. In terms of assembly, interacts with host glycophorin GYPA in a sialic acid-independent manner. Interacts with host proinflammatory cytokine S100P; the interaction blocks S100P inflammatory and chemotactic activities. As to quaternary structure, interacts with host SLC4A1/Band 3 (via 5ABC region) on the host erythrocyte surface in a sialic acid-independent manner. The p190 precursor is cleaved by SUB1 prior to merozoite egress into 4 subunits p83, p30, p38, and p42 which remain non-covalently associated. SUB1-mediated proteolytic cleavage occurs in an orderly manner; the first cleavage occurs at the p83/p30 site, followed by cleavage at the p30/p38 site, the last cleavage occurs at the p38/p42 site. The order of cleavage is essential for parasite viability. SUB1-mediated processing is essential for merozoite egress. In a second processing step during erythrocyte invasion, p42 is cleaved by SUB2 into p33 and p19; the latter remains attached to the merozoite surface via its GPI-anchor and stays on the surface during the subsequent ring stage.

Its subcellular location is the cell membrane. The protein localises to the secreted. It localises to the vacuole membrane. Its function is as follows. During the asexual blood stage, involved in merozoite egress from host erythrocytes possibly via its interaction with the host cytoskeleton protein spectrin resulting in the destabilization of the host cytoskeleton and thus leading to erythrocyte cell membrane rupture. Involved in the binding to host erythrocytes and is required for host erythrocyte invasion. By binding to host proinflammatory cytokine S100P may interfere with host immune responses. In terms of biological role, involved in merozoite invasion of host erythrocytes. May play a role in the biogenesis and/or function of the food vacuole during the intraerythrocytic development. This is Merozoite surface protein 1 from Plasmodium falciparum (isolate K1 / Thailand).